Consider the following 149-residue polypeptide: uncharacterized protein (149 aa).

This is an uncharacterized protein from Saccharomyces cerevisiae (strain ATCC 204508 / S288c) (Baker's yeast).